A 322-amino-acid polypeptide reads, in one-letter code: Beta-carotene 3-hydroxylase, chloroplastic (322 aa).

The N-terminal 68 residues, 1 to 68, are a transit peptide targeting the chloroplast; it reads TFHKPVSGAS…AQRCSLVRLR (68 aa). The next 2 membrane-spanning stretches (helical) occupy residues 118–138 and 149–169; these read QAAA…ATYL and AVPW…ALGM. In terms of domain architecture, Fatty acid hydroxylase spans 164 to 286; that stretch reads GGALGMEMYA…AHQLHHSGKY (123 aa). Positions 177–182 match the Histidine box-1 motif; sequence HKAIWH. A Histidine box-2 motif is present at residues 191–195; that stretch reads HKSHH. 2 consecutive transmembrane segments (helical) span residues 207 to 227 and 231 to 251; these read LFAI…FWLP and GAAC…YMFV. Positions 252-257 match the Histidine box-3 motif; it reads HDGLVH. Positions 278-282 match the Histidine box-4 motif; it reads HQLHH.

It belongs to the sterol desaturase family.

Its subcellular location is the plastid. It is found in the chloroplast membrane. It catalyses the reaction all-trans-beta-carotene + 4 reduced [2Fe-2S]-[ferredoxin] + 2 O2 + 4 H(+) = all-trans-zeaxanthin + 4 oxidized [2Fe-2S]-[ferredoxin] + 2 H2O. Its function is as follows. Nonheme diiron monooxygenase involved in the biosynthesis of astaxanthin. Hydroxylates beta-ring of beta-carotene and catalyzes the conversion of canthaxanthin to astaxanthin. Uses ferredoxin as an electron donor. The chain is Beta-carotene 3-hydroxylase, chloroplastic (CRTZ) from Haematococcus lacustris (Green alga).